We begin with the raw amino-acid sequence, 246 residues long: Small ribosomal subunit protein uS3 (246 aa).

Residues 19-98 (IDEWLAQNFY…NPMLDARVQA (80 aa)) form the KH type-2 domain. The interval 218-246 (LQEETASTLREHMEAARPGEEHEEDREES) is disordered. Residues 226–237 (LREHMEAARPGE) are compositionally biased toward basic and acidic residues.

Belongs to the universal ribosomal protein uS3 family. Part of the 30S ribosomal subunit.

In terms of biological role, binds the lower part of the 30S subunit head. The chain is Small ribosomal subunit protein uS3 from Aeropyrum pernix (strain ATCC 700893 / DSM 11879 / JCM 9820 / NBRC 100138 / K1).